Here is a 162-residue protein sequence, read N- to C-terminus: Large ribosomal subunit protein uL15 (162 aa).

The disordered stretch occupies residues 1–44 (MKLNELRDNPGATKNRIRVGRGIGSGKGKTAGRGVKGQKSREGV). The segment covering 21–35 (RGIGSGKGKTAGRGV) has biased composition (gly residues).

It belongs to the universal ribosomal protein uL15 family. In terms of assembly, part of the 50S ribosomal subunit.

Functionally, binds to the 23S rRNA. The protein is Large ribosomal subunit protein uL15 of Rhodospirillum rubrum (strain ATCC 11170 / ATH 1.1.1 / DSM 467 / LMG 4362 / NCIMB 8255 / S1).